The sequence spans 257 residues: Imidazole glycerol phosphate synthase subunit HisF (257 aa).

Active-site residues include Asp-11 and Asp-130.

This sequence belongs to the HisA/HisF family. In terms of assembly, heterodimer of HisH and HisF.

The protein localises to the cytoplasm. The catalysed reaction is 5-[(5-phospho-1-deoxy-D-ribulos-1-ylimino)methylamino]-1-(5-phospho-beta-D-ribosyl)imidazole-4-carboxamide + L-glutamine = D-erythro-1-(imidazol-4-yl)glycerol 3-phosphate + 5-amino-1-(5-phospho-beta-D-ribosyl)imidazole-4-carboxamide + L-glutamate + H(+). The protein operates within amino-acid biosynthesis; L-histidine biosynthesis; L-histidine from 5-phospho-alpha-D-ribose 1-diphosphate: step 5/9. IGPS catalyzes the conversion of PRFAR and glutamine to IGP, AICAR and glutamate. The HisF subunit catalyzes the cyclization activity that produces IGP and AICAR from PRFAR using the ammonia provided by the HisH subunit. The protein is Imidazole glycerol phosphate synthase subunit HisF of Trichormus variabilis (strain ATCC 29413 / PCC 7937) (Anabaena variabilis).